We begin with the raw amino-acid sequence, 89 residues long: Ribonuclease P protein component 1 (89 aa).

This sequence belongs to the eukaryotic/archaeal RNase P protein component 1 family. Consists of a catalytic RNA component and at least 4-5 protein subunits.

Its subcellular location is the cytoplasm. The catalysed reaction is Endonucleolytic cleavage of RNA, removing 5'-extranucleotides from tRNA precursor.. In terms of biological role, part of ribonuclease P, a protein complex that generates mature tRNA molecules by cleaving their 5'-ends. In Thermoplasma volcanium (strain ATCC 51530 / DSM 4299 / JCM 9571 / NBRC 15438 / GSS1), this protein is Ribonuclease P protein component 1.